Reading from the N-terminus, the 832-residue chain is Protein P (832 aa).

Residues 1-177 (MPLSYQHFRR…FCGSPYSWEQ (177 aa)) form a terminal protein domain (TP) region. The interval 178 to 335 (KLQHGAESFH…YCLSHIVNLL (158 aa)) is spacer. Disordered stretches follow at residues 186-229 (FHQQ…QGRS) and 275-305 (YPTV…RSQS). The polymerase/reverse transcriptase domain (RT) stretch occupies residues 336–679 (EDWGPCTEHG…YMNLYPVARQ (344 aa)). In terms of domain architecture, Reverse transcriptase spans 346–589 (EHHIRIPRTP…YSLHFMGYVI (244 aa)). Mg(2+)-binding residues include aspartate 418, aspartate 540, and aspartate 541.

Belongs to the hepadnaviridae P protein family.

The enzyme catalyses DNA(n) + a 2'-deoxyribonucleoside 5'-triphosphate = DNA(n+1) + diphosphate. It carries out the reaction Endonucleolytic cleavage to 5'-phosphomonoester.. Activated by host HSP70 and HSP40 in vitro to be able to bind the epsilon loop of the pgRNA. Because deletion of the RNase H region renders the protein partly chaperone-independent, the chaperones may be needed indirectly to relieve occlusion of the RNA-binding site by this domain. Inhibited by several reverse-transcriptase inhibitors: Lamivudine, Adefovir and Entecavir. Functionally, multifunctional enzyme that converts the viral RNA genome into dsDNA in viral cytoplasmic capsids. This enzyme displays a DNA polymerase activity that can copy either DNA or RNA templates, and a ribonuclease H (RNase H) activity that cleaves the RNA strand of RNA-DNA heteroduplexes in a partially processive 3'- to 5'-endonucleasic mode. Neo-synthesized pregenomic RNA (pgRNA) are encapsidated together with the P protein, and reverse-transcribed inside the nucleocapsid. Initiation of reverse-transcription occurs first by binding the epsilon loop on the pgRNA genome, and is initiated by protein priming, thereby the 5'-end of (-)DNA is covalently linked to P protein. Partial (+)DNA is synthesized from the (-)DNA template and generates the relaxed circular DNA (RC-DNA) genome. After budding and infection, the RC-DNA migrates in the nucleus, and is converted into a plasmid-like covalently closed circular DNA (cccDNA). The activity of P protein does not seem to be necessary for cccDNA generation, and is presumably released from (+)DNA by host nuclear DNA repair machinery. The sequence is that of Protein P from Homo sapiens (Human).